The following is a 149-amino-acid chain: Cell division protein SepF (149 aa).

Positions 12-57 are disordered; sequence SNEEDDYYEEDGYEQSQQQEQQTTQQTSSQPRFVRQTTQSQTPAGL. Residues 13 to 24 are compositionally biased toward acidic residues; that stretch reads NEEDDYYEEDGY. The span at 25 to 41 shows a compositional bias: low complexity; it reads EQSQQQEQQTTQQTSSQ. Polar residues predominate over residues 46–57; the sequence is RQTTQSQTPAGL.

The protein belongs to the SepF family. In terms of assembly, homodimer. Interacts with FtsZ.

It is found in the cytoplasm. Functionally, cell division protein that is part of the divisome complex and is recruited early to the Z-ring. Probably stimulates Z-ring formation, perhaps through the cross-linking of FtsZ protofilaments. Its function overlaps with FtsA. In Leuconostoc mesenteroides subsp. mesenteroides (strain ATCC 8293 / DSM 20343 / BCRC 11652 / CCM 1803 / JCM 6124 / NCDO 523 / NBRC 100496 / NCIMB 8023 / NCTC 12954 / NRRL B-1118 / 37Y), this protein is Cell division protein SepF.